A 215-amino-acid polypeptide reads, in one-letter code: MSLFGLGRNQKTFRPKKSAPSGSKGAQLRKHIDATLGSGNLREAVRLPPGEDANEWLAVNTVDFFNQVNLLYGTLTEFCTPDNCPTMTAGPKYEYRWADGVQIKKPIEVSAPKYVEYLMDWIETQLDDETLFPQRLGAPFPQNFKDVVKTIFKRLFRVYAHIYHSHFQKIVSLKEEAHLNTCFKHFILFTHEFGLIDKKELAPLQELIESIISPY.

The tract at residues 1–27 (MSLFGLGRNQKTFRPKKSAPSGSKGAQ) is disordered. The Zn(2+) site is built by cysteine 79, cysteine 84, histidine 161, and histidine 166.

This sequence belongs to the MOB1/phocein family. Interacts with SIK1 at the plasma membrane and in the nucleus. As to expression, constitutively expressed. In 3- to 4-day-old seedlings, expression is high in the shoot apical meristem and along the vasculature in cotyledons, hypocotyls and roots. At the root tip, expression is detected in columella and lateral root cap cells as well as in the stem cell niche around the quiescent center (QC). The levels of expression decrease progressively in the meristematic zone from the root tip towards the base of the root, becoming stronger again in the elongation zone. In flowers, expression appears localized in ovules and pollen.

It localises to the nucleus. It is found in the cell membrane. The protein resides in the vacuole membrane. Functionally, plays a key role in regulation of cell expansion and cell division. Required for proper plant development, the correct patterning of the root meristem and the control of root growth. Involved in both sporogenesis and gametogenesis. The polypeptide is MOB kinase activator-like 1A (Arabidopsis thaliana (Mouse-ear cress)).